The following is an 872-amino-acid chain: uncharacterized protein (872 aa).

A coiled-coil region spans residues 496-524 (LQQHHQDISAMQQQILEEKNQLRRATIDV). 2 disordered regions span residues 595–736 (RPAV…SVQQ) and 844–872 (TKEN…PQAV). 2 stretches are compositionally biased toward polar residues: residues 615–659 (QNGN…QTTF) and 670–686 (PYAS…NNVV). A compositionally biased stretch (low complexity) spans 687 to 736 (QQYQSYYDNPSNQQSNQQSNQQSNQQPNQQPNQQPNQQPNQQPNQQSVQQ).

The protein localises to the virion. This is an uncharacterized protein from Acanthamoeba polyphaga mimivirus (APMV).